A 362-amino-acid chain; its full sequence is Aminomethyltransferase (362 aa).

Belongs to the GcvT family. As to quaternary structure, the glycine cleavage system is composed of four proteins: P, T, L and H.

It catalyses the reaction N(6)-[(R)-S(8)-aminomethyldihydrolipoyl]-L-lysyl-[protein] + (6S)-5,6,7,8-tetrahydrofolate = N(6)-[(R)-dihydrolipoyl]-L-lysyl-[protein] + (6R)-5,10-methylene-5,6,7,8-tetrahydrofolate + NH4(+). Functionally, the glycine cleavage system catalyzes the degradation of glycine. This is Aminomethyltransferase from Chlorobium limicola (strain DSM 245 / NBRC 103803 / 6330).